A 140-amino-acid chain; its full sequence is Histone H3-like centromeric protein A (140 aa).

Residues M1–G46 form a disordered region. G2 is modified (n,N,N-trimethylglycine). S7 carries the phosphoserine; by AURKA and AURKB modification. S17, S19, and S27 each carry phosphoserine. The segment covering P26–S37 has biased composition (low complexity). An important for flexibility of DNA ends that protrude from nucleosomes region spans residues Q39–L54. A Phosphoserine modification is found at S68. The CATD stretch occupies residues C75–A116.

This sequence belongs to the histone H3 family. Component of centromeric nucleosomes, where DNA is wrapped around a histone octamer core. The octamer contains two molecules each of H2A, H2B, CENPA and H4 assembled in one CENPA-H4 heterotetramer and two H2A-H2B heterodimers. CENPA modulates the DNA-binding characteristics of nucleosomes so that protruding DNA ends have higher flexibility than in nucleosomes containing conventional histone H3. Inhibits binding of histone H1 to nucleosomes, since histone H1 binds preferentially to rigid DNA linkers that protrude from nucleosomes. Nucleosomes containing CENPA also contain histone H2A variants such as MACROH2A and H2A.Z/H2AZ1. The CENPA-H4 heterotetramer is more compact and structurally more rigid than corresponding H3-H4 heterotetramers. Can assemble into nucleosomes that contain both CENPA and histone H3.3; these nucleosomes interact with a single CENPC chain. Heterotrimer composed of HJURP, CENPA and histone H4, where HJURP interacts with the dimer formed by CENPA and histone H4 and prevents tetramerization of CENPA and H4. Component of the CENPA-NAC complex, at least composed of CENPA, CENPC, CENPH, CENPM, CENPN, CENPT and CENPU. Interacts (via CATD domain) with HJURP; the interaction is direct and is required for its localization to centromeres. Interacts with CENPC, CENPN and CENPT; interaction is direct. Part of a centromere complex consisting of CENPA, CENPT and CENPW. Identified in centromere complexes containing histones H2A, H2B and H4, and at least CENPA, CENPB, CENPC, CENPT, CENPN, HJURP, SUPT16H, SSRP1 and RSF1. Can self-associate. The CENPA-H4 heterotetramer can bind DNA by itself (in vitro). Interacts with CDK1, PPP1CA and RBBP7. In terms of assembly, (Microbial infection) Interacts directly with herpes virus HHV-1 protein ICP0. Post-translationally, ubiquitinated. Interaction with herpes virus HSV-1 ICP0 protein, leads to its degradation by the proteasome pathway. In terms of processing, trimethylated by NTMT1 at the N-terminal glycine after cleavage of Met-1. Methylation is low before incorporation into nucleosomes and increases with cell cycle progression, with the highest levels in mitotic nucleosomes. Phosphorylated by CDK1 at Ser-68 during early mitosis; this abolishes association with chromatin and centromeres, prevents interaction with HJURP and thereby prevents premature assembly of CENPA into centromeres. Dephosphorylated at Ser-68 by PPP1CA during late mitosis. Phosphorylation of Ser-7 by AURKA and AURKB during prophase is required for localization of AURKA and AURKB at inner centromere and is essential for normal cytokinesis. Initial phosphorylation during prophase is mediated by AURKA and is maintained by AURKB. Post-translationally, poly-ADP-ribosylated by PARP1.

It is found in the nucleus. Its subcellular location is the chromosome. The protein localises to the centromere. Functionally, histone H3-like nucleosomal protein that is specifically found in centromeric nucleosomes. Replaces conventional H3 in the nucleosome core of centromeric chromatin that serves as an assembly site for the inner kinetochore. The presence of CENPA subtly modifies the nucleosome structure and the way DNA is wrapped around the nucleosome and gives rise to protruding DNA ends that are less well-ordered and rigid compared to nucleosomes containing histone H3. May serve as an epigenetic mark that propagates centromere identity through replication and cell division. Required for recruitment and assembly of kinetochore proteins, and as a consequence required for progress through mitosis, chromosome segregation and cytokinesis. The sequence is that of Histone H3-like centromeric protein A (CENPA) from Homo sapiens (Human).